Consider the following 430-residue polypeptide: Mothers against decapentaplegic homolog 9 (430 aa).

Positions 16–140 constitute an MH1 domain; the sequence is PAVKRLLGWK…YRRVETPVLP (125 aa). Zn(2+) contacts are provided by Cys-68, Cys-113, Cys-125, and His-130. Residues 186–222 are disordered; sequence CPAPPSSPGHVFPQSPCPTSYPHSPGSPSESDSPYQH. Positions 202-221 are enriched in polar residues; that stretch reads CPTSYPHSPGSPSESDSPYQ. Positions 236–430 constitute an MH2 domain; that stretch reads WCSVAYYELN…SPHNPISSVS (195 aa).

Belongs to the dwarfin/SMAD family. Interaction with the co-SMAD SMAD4. Interacts with PEBP2-alpha subunit. Interacts with RANBP3L. Phosphorylated on serine by BMP (bone morphogenetic proteins) type 1 receptor kinase and activin type I receptor-like kinases (ALK-2, ALK-3 and ALK-6).

It localises to the cytoplasm. The protein resides in the nucleus. Transcriptional modulator activated by BMP (bone morphogenetic proteins) type 1 receptor kinase. SMAD9 is a receptor-regulated SMAD (R-SMAD). Has been shown to be activated by activin type I receptor-like kinases (ALK-2, ALK-3, ALK-6) which stimulate heteromerization between SMAD9 and SMAD4. May play a role in osteoblast differentiation and maturation. In Mus musculus (Mouse), this protein is Mothers against decapentaplegic homolog 9 (Smad9).